The primary structure comprises 369 residues: Glutamate 5-kinase (369 aa).

Lysine 7 contributes to the ATP binding site. Residues serine 48, aspartate 135, and asparagine 147 each contribute to the substrate site. ATP-binding positions include 167-168 and 208-214; these read TD and SGGMASK. The PUA domain maps to 275–353; it reads AGALHLDEGA…HEIAALLGIE (79 aa).

The protein belongs to the glutamate 5-kinase family.

It localises to the cytoplasm. It carries out the reaction L-glutamate + ATP = L-glutamyl 5-phosphate + ADP. The protein operates within amino-acid biosynthesis; L-proline biosynthesis; L-glutamate 5-semialdehyde from L-glutamate: step 1/2. Functionally, catalyzes the transfer of a phosphate group to glutamate to form L-glutamate 5-phosphate. This is Glutamate 5-kinase from Gloeobacter violaceus (strain ATCC 29082 / PCC 7421).